The sequence spans 778 residues: Gelsolin (778 aa).

The first 23 residues, 1-23, serve as a signal peptide directing secretion; it reads MGKQGFGYIFLTIFCTMALKLNC. An actin-severing region spans residues 49–172; it reads MVEHAEFSKA…YKAGGVASGF (124 aa). A Gelsolin-like 1 repeat occupies 72–154; sequence FDLVPVPKNL…VQGHESSTFL (83 aa). Ca(2+)-binding residues include Gly-88, Asp-89, Glu-120, Asp-132, Gly-137, and Ala-139. Residues 119-122 form an actin-actin interfilament contact point region; that stretch reads DERG. 158 to 165 contacts a 1,2-diacyl-sn-glycero-3-phospho-(1D-myo-inositol-4,5-bisphosphate); that stretch reads KSGIKYKA. Ca(2+) is bound at residue Val-168. 184–192 provides a ligand contact to a 1,2-diacyl-sn-glycero-3-phospho-(1D-myo-inositol-4,5-bisphosphate); the sequence is RLLQVKGRR. The Gelsolin-like 2 repeat unit spans residues 193–266; the sequence is TVRATEVPVS…SEEGAEREEM (74 aa). Ca(2+) is bound by residues Gly-209 and Asp-210. Cys-211 and Cys-224 are disulfide-bonded. 18 residues coordinate Ca(2+): Glu-232, Asp-282, Glu-325, Asp-326, Glu-350, Gly-467, Asp-468, Glu-498, Asp-510, Gly-515, Pro-517, Thr-547, Asn-587, Asp-588, Glu-610, Asp-692, Asp-693, and Glu-715. 2 Gelsolin-like repeats span residues 313–385 and 451–532; these read DENP…TPLF and SEKV…PHLM. Residues 430–778 form an actin-binding, Ca-sensitive region; the sequence is AAQHGMEDDG…LQRAMADVDV (349 aa). Gelsolin-like repeat units follow at residues 574–638 and 677–752; these read AVEL…DNFW and IEEV…PPTF.

This sequence belongs to the villin/gelsolin family. Binds to actin and to fibronectin. In terms of tissue distribution, highly expressed in homogene cells of the basilar papilla. Also detected in subcutaneous layer of the skin.

It is found in the secreted. Its subcellular location is the cytoplasm. It localises to the cytoskeleton. Its function is as follows. Calcium-regulated, actin-modulating protein that binds to the plus (or barbed) ends of actin monomers or filaments, preventing monomer exchange (end-blocking or capping). It can promote the assembly of monomers into filaments (nucleation) as well as sever filaments already formed. Plays a role in ciliogenesis. This Gallus gallus (Chicken) protein is Gelsolin (GSN).